The sequence spans 306 residues: 2-phospho-L-lactate transferase (306 aa).

Residue D48 participates in 7,8-didemethyl-8-hydroxy-5-deazariboflavin binding.

The protein belongs to the CofD family. Homodimer. Mg(2+) serves as cofactor.

The catalysed reaction is (2S)-lactyl-2-diphospho-5'-guanosine + 7,8-didemethyl-8-hydroxy-5-deazariboflavin = oxidized coenzyme F420-0 + GMP + H(+). Its pathway is cofactor biosynthesis; coenzyme F420 biosynthesis. Functionally, catalyzes the transfer of the 2-phospholactate moiety from (2S)-lactyl-2-diphospho-5'-guanosine to 7,8-didemethyl-8-hydroxy-5-deazariboflavin (FO) with the formation of oxidized coenzyme F420-0 and GMP. This chain is 2-phospho-L-lactate transferase, found in Methanococcoides burtonii (strain DSM 6242 / NBRC 107633 / OCM 468 / ACE-M).